A 162-amino-acid chain; its full sequence is uncharacterized protein (162 aa).

Its subcellular location is the cytoplasm. The protein resides in the nucleus. This is an uncharacterized protein from Schizosaccharomyces pombe (strain 972 / ATCC 24843) (Fission yeast).